We begin with the raw amino-acid sequence, 882 residues long: Piwi-like protein 3 (882 aa).

Basic residues predominate over residues methionine 1–arginine 15. Residues methionine 1–glutamine 91 form a disordered region. The span at serine 32 to arginine 46 shows a compositional bias: polar residues. Positions threonine 293–glycine 406 constitute a PAZ domain. The 291-residue stretch at lysine 578 to histidine 868 folds into the Piwi domain.

Belongs to the argonaute family. Piwi subfamily. In terms of tissue distribution, expressed in testis.

It is found in the cytoplasm. Its function is as follows. May play a role during spermatogenesis by repressing transposable elements and preventing their mobilization, which is essential for the germline integrity. Acts via the piRNA metabolic process, which mediates the repression of transposable elements during meiosis by forming complexes composed of piRNAs and Piwi proteins and govern the methylation and subsequent repression of transposons. Directly binds piRNAs, a class of 24 to 30 nucleotide RNAs that are generated by a Dicer-independent mechanism and are primarily derived from transposons and other repeated sequence elements. Besides their function in transposable elements repression, piRNAs are probably involved in other processes during meiosis such as translation regulation. This is Piwi-like protein 3 (PIWIL3) from Homo sapiens (Human).